Here is a 538-residue protein sequence, read N- to C-terminus: Putative cysteine ligase BshC (538 aa).

The stretch at I419 to E445 forms a coiled coil.

The protein belongs to the BshC family.

Involved in bacillithiol (BSH) biosynthesis. May catalyze the last step of the pathway, the addition of cysteine to glucosamine malate (GlcN-Mal) to generate BSH. This chain is Putative cysteine ligase BshC, found in Lysinibacillus sphaericus (strain C3-41).